A 188-amino-acid chain; its full sequence is Elongation factor P (188 aa).

At Lys34 the chain carries N6-(3,6-diaminohexanoyl)-5-hydroxylysine.

This sequence belongs to the elongation factor P family. In terms of processing, may be beta-lysylated on the epsilon-amino group of Lys-34 by the combined action of EpmA and EpmB, and then hydroxylated on the C5 position of the same residue by EpmC (if this protein is present). Lysylation is critical for the stimulatory effect of EF-P on peptide-bond formation. The lysylation moiety may extend toward the peptidyltransferase center and stabilize the terminal 3-CCA end of the tRNA. Hydroxylation of the C5 position on Lys-34 may allow additional potential stabilizing hydrogen-bond interactions with the P-tRNA.

It is found in the cytoplasm. The protein operates within protein biosynthesis; polypeptide chain elongation. In terms of biological role, involved in peptide bond synthesis. Alleviates ribosome stalling that occurs when 3 or more consecutive Pro residues or the sequence PPG is present in a protein, possibly by augmenting the peptidyl transferase activity of the ribosome. Modification of Lys-34 is required for alleviation. This chain is Elongation factor P, found in Methylococcus capsulatus (strain ATCC 33009 / NCIMB 11132 / Bath).